The chain runs to 527 residues: Amidophosphoribosyltransferase (527 aa).

The interval 1–30 is disordered; the sequence is MAVDSDYVTDRAAGSRQTVTGQQPEQDLNS. The propeptide occupies 1–34; sequence MAVDSDYVTDRAAGSRQTVTGQQPEQDLNSPREE. Over residues 15 to 29 the composition is skewed to polar residues; that stretch reads SRQTVTGQQPEQDLN. C35 functions as the Nucleophile in the catalytic mechanism. Residues 35 to 261 enclose the Glutamine amidotransferase type-2 domain; sequence CGVFGVWAPG…PGELLAIDAD (227 aa). C276 contacts [4Fe-4S] cluster. 3 residues coordinate Mg(2+): S323, D385, and D386. [4Fe-4S] cluster contacts are provided by C422, C478, and C481.

In the C-terminal section; belongs to the purine/pyrimidine phosphoribosyltransferase family. Mg(2+) is required as a cofactor. It depends on [4Fe-4S] cluster as a cofactor.

It catalyses the reaction 5-phospho-beta-D-ribosylamine + L-glutamate + diphosphate = 5-phospho-alpha-D-ribose 1-diphosphate + L-glutamine + H2O. Its pathway is purine metabolism; IMP biosynthesis via de novo pathway; N(1)-(5-phospho-D-ribosyl)glycinamide from 5-phospho-alpha-D-ribose 1-diphosphate: step 1/2. Catalyzes the formation of phosphoribosylamine from phosphoribosylpyrophosphate (PRPP) and glutamine. This is Amidophosphoribosyltransferase from Mycobacterium bovis (strain ATCC BAA-935 / AF2122/97).